The sequence spans 215 residues: Orotate phosphoribosyltransferase (215 aa).

Lys-25 serves as a coordination point for 5-phospho-alpha-D-ribose 1-diphosphate. 33-34 (FF) is a binding site for orotate. 5-phospho-alpha-D-ribose 1-diphosphate-binding positions include 71 to 72 (YK), Arg-98, Lys-99, Lys-102, His-104, and 124 to 132 (DDVITAGTA). Residues Thr-128 and Arg-156 each coordinate orotate.

Belongs to the purine/pyrimidine phosphoribosyltransferase family. PyrE subfamily. Homodimer.

The enzyme catalyses orotidine 5'-phosphate + diphosphate = orotate + 5-phospho-alpha-D-ribose 1-diphosphate. Its pathway is pyrimidine metabolism; UMP biosynthesis via de novo pathway; UMP from orotate: step 1/2. Catalyzes the transfer of a ribosyl phosphate group from 5-phosphoribose 1-diphosphate to orotate, leading to the formation of orotidine monophosphate (OMP). This is Orotate phosphoribosyltransferase (ura5) from Schizosaccharomyces pombe (strain 972 / ATCC 24843) (Fission yeast).